Consider the following 752-residue polypeptide: Multifunctional tryptophan biosynthesis protein (752 aa).

The Glutamine amidotransferase type-1 domain maps to 23–223; that stretch reads NVILIDNYDS…LELTAGTWDN (201 aa). 74–76 is a binding site for L-glutamine; sequence GPG. C102 functions as the Nucleophile; for GATase activity in the catalytic mechanism. L-glutamine is bound by residues Q106 and 152 to 153; that span reads SL. Active-site for GATase activity residues include H197 and E199. An indole-3-glycerol phosphate synthase region spans residues 239–503; it reads ILDKIYAHRK…DTSAFVAQLL (265 aa). Residues 519 to 752 form an N-(5'-phosphoribosyl)anthranilate isomerase region; it reads LVKICGTRTE…FVKSAKSIRQ (234 aa).

The enzyme catalyses N-(5-phospho-beta-D-ribosyl)anthranilate = 1-(2-carboxyphenylamino)-1-deoxy-D-ribulose 5-phosphate. It catalyses the reaction 1-(2-carboxyphenylamino)-1-deoxy-D-ribulose 5-phosphate + H(+) = (1S,2R)-1-C-(indol-3-yl)glycerol 3-phosphate + CO2 + H2O. It carries out the reaction chorismate + L-glutamine = anthranilate + pyruvate + L-glutamate + H(+). It participates in amino-acid biosynthesis; L-tryptophan biosynthesis; L-tryptophan from chorismate: step 1/5. Its pathway is amino-acid biosynthesis; L-tryptophan biosynthesis; L-tryptophan from chorismate: step 3/5. It functions in the pathway amino-acid biosynthesis; L-tryptophan biosynthesis; L-tryptophan from chorismate: step 4/5. Its function is as follows. Trifunctional enzyme bearing the Gln amidotransferase (GATase) domain of anthranilate synthase, indole-glycerolphosphate synthase, and phosphoribosylanthranilate isomerase activities. This is Multifunctional tryptophan biosynthesis protein (trpC) from Penicillium chrysogenum (Penicillium notatum).